A 213-amino-acid polypeptide reads, in one-letter code: Probable GTP-binding protein EngB (213 aa).

The EngB-type G domain occupies 30–204; sequence SVQSIAFMGR…REFILETLGI (175 aa). GTP contacts are provided by residues 38–45, 65–69, 83–86, 150–153, and 183–185; these read GRSNSGKS, GKTKL, DLPG, TKID, and ISA. Serine 45 and threonine 67 together coordinate Mg(2+).

This sequence belongs to the TRAFAC class TrmE-Era-EngA-EngB-Septin-like GTPase superfamily. EngB GTPase family. Mg(2+) serves as cofactor.

In terms of biological role, necessary for normal cell division and for the maintenance of normal septation. This chain is Probable GTP-binding protein EngB, found in Leptospira biflexa serovar Patoc (strain Patoc 1 / Ames).